A 101-amino-acid chain; its full sequence is Small ribosomal subunit protein uS14 (101 aa).

This sequence belongs to the universal ribosomal protein uS14 family. Part of the 30S ribosomal subunit. Contacts proteins S3 and S10.

In terms of biological role, binds 16S rRNA, required for the assembly of 30S particles and may also be responsible for determining the conformation of the 16S rRNA at the A site. The sequence is that of Small ribosomal subunit protein uS14 from Aeromonas salmonicida (strain A449).